The primary structure comprises 615 residues: Putative binding protein BruAb2_0648 (615 aa).

A signal peptide spans 1–29 (MLNRFIAFFRSVFLIGLVATAFGALPARA).

This sequence belongs to the bacterial solute-binding protein 5 family.

The protein localises to the periplasm. This is Putative binding protein BruAb2_0648 from Brucella abortus biovar 1 (strain 9-941).